The primary structure comprises 115 residues: Protein translation factor SUI1 homolog (115 aa).

It belongs to the SUI1 family.

Its function is as follows. Probably involved in translation. The protein is Protein translation factor SUI1 homolog (TIF) of Zea mays (Maize).